A 404-amino-acid chain; its full sequence is Exodeoxyribonuclease 7 large subunit (404 aa).

Belongs to the XseA family. In terms of assembly, heterooligomer composed of large and small subunits.

It is found in the cytoplasm. The enzyme catalyses Exonucleolytic cleavage in either 5'- to 3'- or 3'- to 5'-direction to yield nucleoside 5'-phosphates.. Its function is as follows. Bidirectionally degrades single-stranded DNA into large acid-insoluble oligonucleotides, which are then degraded further into small acid-soluble oligonucleotides. In Fusobacterium nucleatum subsp. nucleatum (strain ATCC 25586 / DSM 15643 / BCRC 10681 / CIP 101130 / JCM 8532 / KCTC 2640 / LMG 13131 / VPI 4355), this protein is Exodeoxyribonuclease 7 large subunit.